We begin with the raw amino-acid sequence, 285 residues long: UstYa family oxidase phomYe (285 aa).

Residues 32 to 54 (LFYGWKGIAFLSTLTNVLFISGF) form a helical membrane-spanning segment. A disordered region spans residues 143-165 (YGFGTPLTGPGSEGNEHDPTPWT). Residues 177–181 (HQLHC) carry the HXXHC 1 motif. N202 carries an N-linked (GlcNAc...) asparagine glycan. Positions 209–213 (HVDHC) match the HXXHC 2 motif.

The protein belongs to the ustYa family.

It is found in the membrane. Its pathway is mycotoxin biosynthesis. Its function is as follows. UstYa family oxidase; part of the gene cluster that mediates the biosynthesis of the phomopsins, a group of hexapeptide mycotoxins which infects lupins and causes lupinosis disease in livestock. Within the pathway, phomYe catalyzes the desaturation of the Pro moiety into 3,4-dehydroproline (dPro). The pathway starts with the processing of the precursor phomA by several endopeptidases including kexin proteases as well as the cluster-specific S41 family peptidase phomP1 and the oligopeptidase phomG to produce 10 identical copies of the hexapeptide Tyr-Val-Ile-Pro-Ile-Asp. After being excised from the precursor peptide, the core peptides are cyclized and modified post-translationally by enzymes encoded within the gene cluster. The timing and order of proteolysis of the phomA precursor and PTMs are still unknown. Two tyrosinase-like enzymes, phomQ1 and phomQ2, catalyze the chlorination and hydroxylation of Tyr, respectively. PhomYb, is proposed to be involved in the construction of the macrocyclic structure. The other 4 ustYa family proteins may be involved in PTMs that generate the unique structure of phomopsin A. PhomYa is required for the hydroxylation of C-beta of Tyr. PhomYc, phomYd, and phomYe are responsible for the biosynthesis of 2,3-dehydroisoleucine (dIle), 2,3-dehydroaspartic acid (dAsp), and 3,4-dehydroproline (dPro), respectively. While dIle formation by phomYc is indispensable for the installation of dAsp by phomYd, the order of the other PTMs have not been elucidated yet. Most of the biosynthetic enzymes likely have broad substrate specificity, and thus, there might be a metabolic grid from a precursor to phomopsin A. The enzyme(s) responsible for the biosynthesis of 3,4-dehydrovaline (dVal) have also not been identified yet. Finally, phomM acts as an S-adenosylmethionine-dependent alpha-N-methyltransferase that catalyzes two successive N-methylation reactions, converting N-desmethyl-phomopsin A to phomopsin A and phomopsin A further to an N,N-dimethylated congener called phomopsin E. This is UstYa family oxidase phomYe from Diaporthe leptostromiformis (Lupinosis disease fungus).